Reading from the N-terminus, the 472-residue chain is Na(+)/H(+) antiporter NhaA (472 aa).

10 helical membrane-spanning segments follow: residues 24–44 (ISGLIMLGFALTGLVLANLPA), 66–86 (LPIGHWAQDGLLTIFFLTVGL), 108–128 (LCAVGGMIAPPILFLAVTALF), 156–176 (GWAVPTATDIAFSLAVLALFA), 196–216 (LLAIILIAVFFSSINAWYWFI), 234–254 (VPWIAVGIVGILAWIMMFEAG), 290–310 (PFSALLALPIFALFATGVHFE), 312–332 (MSPLLLASPLVIALIVALVVG), 361–381 (MIPAAVACGIGFTVSFLIASL), and 392–412 (ARFGVLVASLIAAAISGVLLS). The segment at 422–472 (AAAAAADEEDDESIDGDGIGQPSHTTEPTTPTEHPGTLADGTASVEIDFRH) is disordered. The span at 427-436 (ADEEDDESID) shows a compositional bias: acidic residues. The segment covering 445 to 456 (HTTEPTTPTEHP) has biased composition (low complexity).

This sequence belongs to the NhaA Na(+)/H(+) (TC 2.A.33) antiporter family.

The protein resides in the cell membrane. It catalyses the reaction Na(+)(in) + 2 H(+)(out) = Na(+)(out) + 2 H(+)(in). Functionally, na(+)/H(+) antiporter that extrudes sodium in exchange for external protons. The sequence is that of Na(+)/H(+) antiporter NhaA from Bifidobacterium longum (strain NCC 2705).